Here is a 310-residue protein sequence, read N- to C-terminus: Malate dehydrogenase (310 aa).

NAD(+) is bound by residues 7-12 (GAGNVG) and aspartate 32. 2 residues coordinate substrate: arginine 81 and arginine 87. NAD(+) is bound by residues asparagine 94 and 117-119 (VSN). The substrate site is built by asparagine 119 and arginine 150. The Proton acceptor role is filled by histidine 174.

This sequence belongs to the LDH/MDH superfamily. MDH type 3 family. Homotetramer; arranged as a dimer of dimers.

It catalyses the reaction (S)-malate + NAD(+) = oxaloacetate + NADH + H(+). Its function is as follows. Catalyzes the reversible oxidation of malate to oxaloacetate. This chain is Malate dehydrogenase, found in Chlorobaculum tepidum (strain ATCC 49652 / DSM 12025 / NBRC 103806 / TLS) (Chlorobium tepidum).